Reading from the N-terminus, the 141-residue chain is HTH-type transcriptional repressor NsrR (141 aa).

The 128-residue stretch at 2 to 129 (QLTSFTDYGL…DNYTLADMVK (128 aa)) folds into the HTH rrf2-type domain. Residues 28 to 51 (ISQVTEVYGVSRNHMVKIINQLSR) constitute a DNA-binding region (H-T-H motif). Positions 91, 96, and 102 each coordinate [2Fe-2S] cluster.

Requires [2Fe-2S] cluster as cofactor.

In terms of biological role, nitric oxide-sensitive repressor of genes involved in protecting the cell against nitrosative stress. May require iron for activity. The polypeptide is HTH-type transcriptional repressor NsrR (Yersinia pseudotuberculosis serotype O:1b (strain IP 31758)).